A 441-amino-acid chain; its full sequence is Plasmepsin VI (441 aa).

The Cytoplasmic segment spans residues 1–7 (MTNFCIK). Residues 8-28 (SYLFLYLSFLLFFDIITIFHV) traverse the membrane as a helical; Signal-anchor for type II membrane protein segment. The Extracellular portion of the chain corresponds to 29–441 (SSIRISTVLK…VGVVKSNHNF (413 aa)). The Peptidase A1 domain maps to 109 to 435 (FIGDIEIGNP…DNDHKLVGVV (327 aa)). Residues D127 and D324 contribute to the active site.

This sequence belongs to the peptidase A1 family.

It localises to the membrane. In terms of biological role, during the development in the mosquito midgut, plays a role in sporozoite egress from oocysts. This chain is Plasmepsin VI, found in Plasmodium berghei (strain Anka).